The primary structure comprises 133 residues: Profilin Sal k 4.0101 (133 aa).

Cysteine 95 and cysteine 117 are oxidised to a cystine.

Belongs to the profilin family. As to quaternary structure, occurs in many kinds of cells as a complex with monomeric actin in a 1:1 ratio. As to expression, expressed in pollen.

It localises to the cytoplasm. The protein resides in the cytoskeleton. In terms of biological role, binds to actin and affects the structure of the cytoskeleton. At high concentrations, profilin prevents the polymerization of actin, whereas it enhances it at low concentrations. This Kali turgidum (Prickly saltwort) protein is Profilin Sal k 4.0101.